Here is a 106-residue protein sequence, read N- to C-terminus: UPF0145 protein Csac_0771 (106 aa).

This sequence belongs to the UPF0145 family.

The chain is UPF0145 protein Csac_0771 from Caldicellulosiruptor saccharolyticus (strain ATCC 43494 / DSM 8903 / Tp8T 6331).